We begin with the raw amino-acid sequence, 355 residues long: DNA polymerase IV (355 aa).

The region spanning 4-185 (IIHIDMDCYF…LSLGKIPGVG (182 aa)) is the UmuC domain. 2 residues coordinate Mg(2+): Asp-8 and Asp-103. Glu-104 is an active-site residue.

This sequence belongs to the DNA polymerase type-Y family. As to quaternary structure, monomer. It depends on Mg(2+) as a cofactor.

It localises to the cytoplasm. The catalysed reaction is DNA(n) + a 2'-deoxyribonucleoside 5'-triphosphate = DNA(n+1) + diphosphate. Functionally, poorly processive, error-prone DNA polymerase involved in untargeted mutagenesis. Copies undamaged DNA at stalled replication forks, which arise in vivo from mismatched or misaligned primer ends. These misaligned primers can be extended by PolIV. Exhibits no 3'-5' exonuclease (proofreading) activity. May be involved in translesional synthesis, in conjunction with the beta clamp from PolIII. This is DNA polymerase IV from Shewanella amazonensis (strain ATCC BAA-1098 / SB2B).